A 108-amino-acid polypeptide reads, in one-letter code: Structural protein 1 (108 aa).

The interval 1 to 20 (MSRVSEYGVPEGVRESDSDT) is disordered. Over 1–77 (MSRVSEYGVP…LKMQMDRLCN (77 aa)) the chain is Intravirion. Residues 78 to 98 (VLGVVLQMATLALVTYIAFVV) form a helical; Signal-anchor for type II membrane protein membrane-spanning segment. Over 99 to 108 (HTRATSCKRE) the chain is Virion surface.

Belongs to the varicellovirus ORF1 protein family. As to quaternary structure, homodimer. Post-translationally, phosphorylated.

The protein localises to the virion membrane. It is found in the host Golgi apparatus membrane. The polypeptide is Structural protein 1 (Varicella-zoster virus (strain Dumas) (HHV-3)).